The sequence spans 341 residues: UPF0283 membrane protein HD_1769 (341 aa).

Transmembrane regions (helical) follow at residues leucine 57–isoleucine 77, isoleucine 86–isoleucine 106, and glutamate 204–tryptophan 224.

This sequence belongs to the UPF0283 family.

The protein resides in the cell inner membrane. The protein is UPF0283 membrane protein HD_1769 of Haemophilus ducreyi (strain 35000HP / ATCC 700724).